The following is an 88-amino-acid chain: MGIARILSAVLFLSVLFVVTFPTLLSADHHDGRIDTCRLPSDRGRCKASFERWYFNGTTCAKFVYGGYGGNDNRFPTEKACMKRCAKA.

Positions 1–27 (MGIARILSAVLFLSVLFVVTFPTLLSA) are cleaved as a signal peptide. The propeptide occupies 28-33 (DHHDGR). Residues 37–85 (CRLPSDRGRCKASFERWYFNGTTCAKFVYGGYGGNDNRFPTEKACMKRC) enclose the BPTI/Kunitz inhibitor domain. 2 disulfide bridges follow: cysteine 37-cysteine 85 and cysteine 60-cysteine 81.

This sequence belongs to the venom Kunitz-type family. 01 (intermediate) subfamily. In terms of tissue distribution, expressed by the venom gland.

It is found in the secreted. Functionally, serine protease inhibitor that inhibits trypsin at a molar ratio of 1:1. This Cyriopagopus hainanus (Chinese bird spider) protein is Kunitz-type U15-theraphotoxin-Hhn1m.